The following is a 371-amino-acid chain: 4-hydroxyphenylpyruvate dioxygenase-like protein (371 aa).

VOC domains lie at 7 to 135 and 160 to 328; these read RLCH…LLQR and HVDH…VFTK. The Fe cation site is built by histidine 163, histidine 258, and glutamate 339.

It belongs to the 4HPPD family. It depends on Fe cation as a cofactor.

The protein localises to the mitochondrion. The enzyme catalyses 3-(4-hydroxyphenyl)pyruvate + O2 = (S)-4-hydroxymandelate + CO2. Iron-dependent dioxygenase that catalyzes the conversion of 4-hydroxyphenylpyruvate (4-HPPA) to 4-hydroxymandelate (4-HMA) in the mitochondria, one of the steps in the biosynthesis of coenzyme Q10 from tyrosine. The protein is 4-hydroxyphenylpyruvate dioxygenase-like protein of Rattus norvegicus (Rat).